A 396-amino-acid chain; its full sequence is Elongation factor Tu (396 aa).

Positions 10–205 constitute a tr-type G domain; the sequence is KTHANIGTIG…AVDEYIPTPE (196 aa). The interval 19 to 26 is G1; it reads GHVDHGKT. 19–26 is a binding site for GTP; it reads GHVDHGKT. A Mg(2+)-binding site is contributed by threonine 26. Positions 61–65 are G2; it reads GITIS. A G3 region spans residues 82–85; that stretch reads DCPG. GTP contacts are provided by residues 82-86 and 137-140; these read DCPGH and NKCD. Residues 137–140 form a G4 region; the sequence is NKCD. Residues 175–177 are G5; sequence SAL.

The protein belongs to the TRAFAC class translation factor GTPase superfamily. Classic translation factor GTPase family. EF-Tu/EF-1A subfamily. As to quaternary structure, monomer.

It localises to the cytoplasm. The enzyme catalyses GTP + H2O = GDP + phosphate + H(+). GTP hydrolase that promotes the GTP-dependent binding of aminoacyl-tRNA to the A-site of ribosomes during protein biosynthesis. This chain is Elongation factor Tu, found in Shouchella clausii (strain KSM-K16) (Alkalihalobacillus clausii).